The chain runs to 301 residues: WD repeat-containing protein SL1-17 (301 aa).

WD repeat units lie at residues 11–54 (AHKE…LKCL), 59–98 (GHRL…LTKT), 101–140 (GDPA…KEGS), 143–182 (LEGK…VQFL), 184–223 (GHAT…LVIP), 227–266 (GHKG…EKHC), and 269–300 (THED…IYQC).

This is WD repeat-containing protein SL1-17 from Schistosoma mansoni (Blood fluke).